Reading from the N-terminus, the 415-residue chain is Beta-2 adrenergic receptor (415 aa).

Residues 1-34 are Extracellular-facing; that stretch reads MGQPANRSVFLLAPNGSHAPDQGDSQERSEAWVV. 2 N-linked (GlcNAc...) asparagine glycosylation sites follow: asparagine 6 and asparagine 15. The helical transmembrane segment at 35 to 58 threads the bilayer; it reads GMGIVMSLIVLAIVFGNVLVITAI. Over 59–71 the chain is Cytoplasmic; that stretch reads ARFERLQTVTNYF. Residues 72–95 traverse the membrane as a helical segment; that stretch reads ITSLACADLVMGLAVVPFGASHIL. The Extracellular segment spans residues 96-106; sequence MKMWTFGNFWC. 2 cysteine pairs are disulfide-bonded: cysteine 106–cysteine 191 and cysteine 184–cysteine 190. The chain crosses the membrane as a helical span at residues 107–129; that stretch reads EFWTSIDVLCVTASIETLCVIAV. Residues 130 to 150 lie on the Cytoplasmic side of the membrane; that stretch reads DRYFAITSPFKYQSLLTKNKA. Phosphotyrosine is present on tyrosine 141. Residues 151 to 174 traverse the membrane as a helical segment; that stretch reads RVVILMVWIVSGLTSFLPIQMHWY. The Extracellular portion of the chain corresponds to 175–196; the sequence is RATHQEAINCYAKETCCDFFTN. The helical transmembrane segment at 197-220 threads the bilayer; the sequence is QAYAIASSIVSFYLPLVVMVFVYS. The Cytoplasmic portion of the chain corresponds to 221–274; sequence RVFQVAQRQLQKIDRSEGRFHAQNLSQVEQDGRSGHGHRRSSKFCLKEHKALKT. At serine 246 the chain carries Phosphoserine. A phosphoserine; by PKA mark is found at serine 261 and serine 262. Cysteine 265 carries S-palmitoyl cysteine lipidation. A helical transmembrane segment spans residues 275–298; it reads LGIIMGTFTLCWLPFFIVNIVHVI. The Extracellular portion of the chain corresponds to 299–305; the sequence is QDNLIPK. The helical transmembrane segment at 306–329 threads the bilayer; sequence EVYILLNWVGYVNSAFNPLIYCRS. Residues 330-415 lie on the Cytoplasmic side of the membrane; it reads PDFRIAFQEL…RNCSTNDSLL (86 aa). Cysteine 341 carries S-palmitoyl cysteine lipidation. Serine 345 and serine 346 each carry phosphoserine; by PKA. Serine 355 bears the Phosphoserine; by BARK mark. Residues 379 to 415 form a disordered region; it reads SELLCEDPPGTEDRQGTVPSDSVDSQGRNCSTNDSLL. Residues proline 387 and proline 397 each carry the 4-hydroxyproline modification. Residues 395–415 show a composition bias toward polar residues; it reads TVPSDSVDSQGRNCSTNDSLL. Positions 412–415 match the PDZ-binding motif; it reads DSLL.

This sequence belongs to the G-protein coupled receptor 1 family. Adrenergic receptor subfamily. ADRB2 sub-subfamily. Binds NHERF1 and GPRASP1. Interacts with ARRB1 and ARRB2. Interacts with SRC. Interacts with USP20 and USP33. Interacts with VHL; the interaction, which is increased on hydroxylation of ADRB2, ubiquitinates ADRB2 leading to its degradation. Interacts with EGLN3; the interaction hydroxylates ADRB2 facilitating VHL-E3 ligase-mediated ubiquitination. Interacts (via PDZ-binding motif) with SNX27 (via PDZ domain); the interaction is required when endocytosed to prevent degradation in lysosomes and promote recycling to the plasma membrane. Interacts with CNIH4. Interacts with ARRDC3. Interacts with NEDD4. Interacts with MARCHF2. Palmitoylated; may reduce accessibility of Ser-345 and Ser-346 by anchoring Cys-341 to the plasma membrane. Agonist stimulation promotes depalmitoylation and further allows Ser-345 and Ser-346 phosphorylation. In terms of processing, phosphorylated by PKA and BARK upon agonist stimulation, which mediates homologous desensitization of the receptor. PKA-mediated phosphorylation seems to facilitate phosphorylation by BARK. Post-translationally, phosphorylation of Tyr-141 is induced by insulin and leads to supersensitization of the receptor. Polyubiquitinated. Agonist-induced ubiquitination leads to sort internalized receptors to the lysosomes for degradation. Deubiquitination by USP20 and USP33, leads to ADRB2 recycling and resensitization after prolonged agonist stimulation. USP20 and USP33 are constitutively associated and are dissociated immediately after agonist stimulation. Ubiquitination by the VHL-E3 ligase complex is oxygen-dependent. In terms of processing, hydroxylation by EGLN3 occurs only under normoxia and increases the interaction with VHL and the subsequent ubiquitination and degradation of ADRB2. Post-translationally, palmitoylated. Mainly palmitoylated at Cys-341. Palmitoylation may reduce accessibility of phosphorylation sites by anchoring the receptor to the plasma membrane. Agonist stimulation promotes depalmitoylation and further allows Ser-345 and Ser-346 phosphorylation. Also undergoes transient, ligand-induced palmitoylation at Cys-265 probably by ZDHHC9, ZDHHC14 and ZDHHC18 within the Golgi. Palmitoylation at Cys-265 requires phosphorylation by PKA and receptor internalization and stabilizes the receptor. Could be depalmitoylated by LYPLA1 at the plasma membrane.

The protein localises to the cell membrane. It localises to the early endosome. Its subcellular location is the golgi apparatus. Its function is as follows. Beta-adrenergic receptors mediate the catecholamine-induced activation of adenylate cyclase through the action of G proteins. The beta-2-adrenergic receptor binds epinephrine with an approximately 30-fold greater affinity than it does norepinephrine. The protein is Beta-2 adrenergic receptor (ADRB2) of Canis lupus familiaris (Dog).